A 534-amino-acid chain; its full sequence is Putative ammonium transporter 1 (534 aa).

Transmembrane regions (helical) follow at residues 31-51, 69-89, 115-135, 139-159, 184-204, 223-243, 263-283, 291-311, 318-338, 346-366, and 401-421; these read SFFLCSMALIIFFMQCGFAYL, LLDSCICIIGYWAIGWALAYG, FFFQYVFSATAATIVSGAVAE, FITYVTYCTVISTFIYPVLTH, FAGSGLVHLCGGSISFLAAWI, ILGHSVPFTALGGFILMFGFL, ALAMINTILSGAFAALIYLGV, WTLLLTINACLSGMVAACAGC, ACIWVGLGAGLIYLAFSKLMI, LDAFAVHAGGGFWGLMSSSII, and ICALAIIAWSLGVMLPIFWIL.

Belongs to the ammonia transporter channel (TC 1.A.11.2) family.

The protein resides in the membrane. Its function is as follows. Involved in the uptake of ammonia. This Caenorhabditis elegans protein is Putative ammonium transporter 1 (amt-1).